We begin with the raw amino-acid sequence, 379 residues long: Tryptophan 2,3-dioxygenase (379 aa).

Residues Phe57–His61 and Arg128 each bind substrate. His312 serves as a coordination point for heme. Thr327 provides a ligand contact to substrate.

The protein belongs to the tryptophan 2,3-dioxygenase family. Homotetramer. Dimer of dimers. It depends on heme as a cofactor.

The enzyme catalyses L-tryptophan + O2 = N-formyl-L-kynurenine. The protein operates within amino-acid degradation; L-tryptophan degradation via kynurenine pathway; L-kynurenine from L-tryptophan: step 1/2. Its pathway is pigment biosynthesis; ommochrome biosynthesis. Its function is as follows. Heme-dependent dioxygenase that catalyzes the oxidative cleavage of the L-tryptophan (L-Trp) pyrrole ring and converts L-tryptophan to N-formyl-L-kynurenine. Catalyzes the oxidative cleavage of the indole moiety. This Drosophila sechellia (Fruit fly) protein is Tryptophan 2,3-dioxygenase.